The sequence spans 512 residues: uncharacterized protein (512 aa).

An N-terminal signal peptide occupies residues 1 to 22 (MVSSLIYSLCAVSGLLATTVNG). Asn167 is a glycosylation site (N-linked (GlcNAc...) asparagine). A disordered region spans residues 251 to 282 (SAASPPIYEPDRQTDPEDPETGRNNNQGFEGL).

It is found in the secreted. This is an uncharacterized protein from Arthroderma benhamiae (strain ATCC MYA-4681 / CBS 112371) (Trichophyton mentagrophytes).